Reading from the N-terminus, the 251-residue chain is Hydroxyacylglutathione hydrolase (251 aa).

Residues His53, His55, Asp57, His58, His110, Asp127, and His165 each contribute to the Zn(2+) site.

Belongs to the metallo-beta-lactamase superfamily. Glyoxalase II family. Monomer. Zn(2+) is required as a cofactor.

It catalyses the reaction an S-(2-hydroxyacyl)glutathione + H2O = a 2-hydroxy carboxylate + glutathione + H(+). Its pathway is secondary metabolite metabolism; methylglyoxal degradation; (R)-lactate from methylglyoxal: step 2/2. Thiolesterase that catalyzes the hydrolysis of S-D-lactoyl-glutathione to form glutathione and D-lactic acid. The chain is Hydroxyacylglutathione hydrolase from Yersinia pseudotuberculosis serotype IB (strain PB1/+).